A 508-amino-acid polypeptide reads, in one-letter code: MGLPWYRVHTVVLNDPGRLLSVHIMHTALVSGWAGSMALYELAVFDPSDPVLDPMWRQGMFVIPFMTRLGITNSWGGWSITGGTITNPGIWSYEGVAGAHIVFSGLCFLAAIWHWVYWDLEIFCDERTGKPSLDLPKIFGIHLFLSGVACFGFGAFHVTGLYGPGIWVSDPYGLTGKVQSVNPAWGAEGFDPFVPGGIASHHIAAGTLGILAGLFHLSVRPPQRLYKGLRMGNIETVLSSSIAAVFFAAFVVAGTMWYGSATTPIELFGPTRYQWDQGYFQQEIYRRVGTGLAENLSLSEAWSKIPDKLAFYDYIGNNPAKGGLFRAGSMDNGDGIAVGWLGHPIFRDKDGHELFVRRMPTFFETFPVVLVDGDGIVRADVPFRRAESKYSVEQVGVTVEFYGGELNGVSYGDPATVKKYARRAQLGEIFELDRATLKSDGVFRSSPRGWFTFGHASFALLFFFGHIWHGARTLFRDVFAGIDPDLDAQVEFGAFQKLGDPTTRRQVV.

6 helical membrane-spanning segments follow: residues 21–36, 101–115, 140–156, 203–218, 237–252, and 457–472; these read SVHI…WAGS, IVFS…IWHW, GIHL…FGAF, IAAG…FHLS, VLSS…AFVV, and SFAL…HGAR.

Belongs to the PsbB/PsbC family. PsbB subfamily. In terms of assembly, PSII is composed of 1 copy each of membrane proteins PsbA, PsbB, PsbC, PsbD, PsbE, PsbF, PsbH, PsbI, PsbJ, PsbK, PsbL, PsbM, PsbT, PsbX, PsbY, PsbZ, Psb30/Ycf12, at least 3 peripheral proteins of the oxygen-evolving complex and a large number of cofactors. It forms dimeric complexes. It depends on Binds multiple chlorophylls. PSII binds additional chlorophylls, carotenoids and specific lipids. as a cofactor.

The protein localises to the plastid. It is found in the chloroplast thylakoid membrane. Functionally, one of the components of the core complex of photosystem II (PSII). It binds chlorophyll and helps catalyze the primary light-induced photochemical processes of PSII. PSII is a light-driven water:plastoquinone oxidoreductase, using light energy to abstract electrons from H(2)O, generating O(2) and a proton gradient subsequently used for ATP formation. The sequence is that of Photosystem II CP47 reaction center protein from Illicium oligandrum (Star anise).